Consider the following 1162-residue polypeptide: Protein OBERON 4 (1162 aa).

Basic and acidic residues-rich tracts occupy residues methionine 1–aspartate 19, asparagine 61–glutamate 77, phenylalanine 90–arginine 99, and valine 118–leucine 134. Disordered regions lie at residues methionine 1–serine 235, isoleucine 251–asparagine 307, aspartate 321–glutamate 346, and serine 441–valine 485. Polar residues predominate over residues lysine 135–glutamate 146. Residues serine 148–asparagine 157 are compositionally biased toward basic and acidic residues. Over residues lysine 163 to valine 182 the composition is skewed to polar residues. Residues glutamate 203 to proline 213 are compositionally biased toward acidic residues. 4 stretches are compositionally biased toward basic and acidic residues: residues threonine 225–serine 235, serine 263–glutamate 300, aspartate 336–glutamate 346, and serine 441–asparagine 457. The segment at alanine 835–proline 899 adopts a PHD-type zinc-finger fold. A coiled-coil region spans residues methionine 1065–alanine 1161.

As to quaternary structure, self-interacts. Interacts with OBE1 and OBE2. Interacts with OBE3.

Its subcellular location is the nucleus. Functionally, probable transcription factor that functions redundantly with OBE3 in specification of the hypophysis and establishment of the embryonic root. Involved in the activation of ARF5/MP-dependent gene expression during embryonic root meristem initiation. Involved in shoot meristem homeostasis. The polypeptide is Protein OBERON 4 (Arabidopsis thaliana (Mouse-ear cress)).